The sequence spans 312 residues: Glyoxylate/hydroxypyruvate reductase A (312 aa).

Arginine 227 is a catalytic residue. The active-site Proton donor is histidine 275.

The protein belongs to the D-isomer specific 2-hydroxyacid dehydrogenase family. GhrA subfamily.

The protein localises to the cytoplasm. It carries out the reaction glycolate + NADP(+) = glyoxylate + NADPH + H(+). It catalyses the reaction (R)-glycerate + NAD(+) = 3-hydroxypyruvate + NADH + H(+). The catalysed reaction is (R)-glycerate + NADP(+) = 3-hydroxypyruvate + NADPH + H(+). Functionally, catalyzes the NADPH-dependent reduction of glyoxylate and hydroxypyruvate into glycolate and glycerate, respectively. This Escherichia fergusonii (strain ATCC 35469 / DSM 13698 / CCUG 18766 / IAM 14443 / JCM 21226 / LMG 7866 / NBRC 102419 / NCTC 12128 / CDC 0568-73) protein is Glyoxylate/hydroxypyruvate reductase A.